The primary structure comprises 294 residues: Putative ribose uptake protein RbsU (294 aa).

10 consecutive transmembrane segments (helical) span residues 2 to 24 (NAVN…VIVG), 34 to 56 (ILGT…GTPI), 63 to 82 (IFCL…TFHV), 92 to 114 (MPIT…LGNW), 121 to 140 (LIGF…TAWS), 150 to 172 (GAVK…SAFP), 179 to 198 (GFQG…IIFG), 218 to 235 (IFSG…LISA), 242 to 264 (LATG…IYIL), and 274 to 293 (IAVM…TAFI).

This sequence belongs to the GRP transporter (TC 2.A.7.5) family.

Its subcellular location is the cell membrane. In terms of biological role, could be involved in the uptake of ribose. In Latilactobacillus sakei subsp. sakei (strain 23K) (Lactobacillus sakei subsp. sakei), this protein is Putative ribose uptake protein RbsU (rbsU).